We begin with the raw amino-acid sequence, 244 residues long: Cobalt transport protein CbiM (244 aa).

Positions 1-28 are cleaved as a signal peptide; the sequence is MKKLWKFIPFVLMGVIYFTLTNPESAHA. 6 helical membrane-spanning segments follow: residues 37–57, 71–91, 103–123, 135–155, 166–186, and 206–226; these read PVKW…LGLI, LLLA…IPSV, LATV…VLLF, TLGA…FVVY, SVSI…TTSV, and FMAI…LLTV.

Belongs to the CbiM family. Forms an energy-coupling factor (ECF) transporter complex composed of an ATP-binding protein (A component, CbiO), a transmembrane protein (T component, CbiQ) and 2 possible substrate-capture proteins (S components, CbiM and CbiN) of unknown stoichimetry.

The protein resides in the cell membrane. It functions in the pathway cofactor biosynthesis; adenosylcobalamin biosynthesis. Its function is as follows. Part of the energy-coupling factor (ECF) transporter complex CbiMNOQ involved in cobalt import. This chain is Cobalt transport protein CbiM, found in Listeria seeligeri serovar 1/2b (strain ATCC 35967 / DSM 20751 / CCM 3970 / CCUG 15530 / CIP 100100 / LMG 11386 / NCTC 11856 / SLCC 3954 / 1120).